Consider the following 282-residue polypeptide: Putative hydrolase Bcen_5340 (282 aa).

The Mg(2+) site is built by Glu124, Glu126, and Asp155.

It belongs to the FAH family. Mg(2+) serves as cofactor.

This chain is Putative hydrolase Bcen_5340, found in Burkholderia orbicola (strain AU 1054).